The following is a 352-amino-acid chain: Thrombopoietin (352 aa).

The N-terminal stretch at 1-23 (MELTELLLVVMLLLTARLDPCLP) is a signal peptide. 2 disulfides stabilise this stretch: C28-C172 and C50-C106. N-linked (GlcNAc...) asparagine glycans are attached at residues N185, N197, N206, N234, and N255. Polar residues predominate over residues 233 to 245 (LNQTSRSLNQTPG). 2 disordered regions span residues 233 to 259 (LNQT…GTHG) and 292 to 352 (YSPS…SQEE). Over residues 311 to 327 (PTSPTPQNPLQPPPPDP) the composition is skewed to pro residues. Residues N332 and N347 are each glycosylated (N-linked (GlcNAc...) asparagine).

This sequence belongs to the EPO/TPO family.

The protein resides in the secreted. Functionally, lineage-specific cytokine affecting the proliferation and maturation of megakaryocytes from their committed progenitor cells. It acts at a late stage of megakaryocyte development. It may be the major physiological regulator of circulating platelets. This Canis lupus familiaris (Dog) protein is Thrombopoietin (THPO).